The following is a 246-amino-acid chain: RNA polymerase sigma-B factor (246 aa).

The Polymerase core binding motif lies at 25–38 (DLIQEGNIGLMKAV). A DNA-binding region (H-T-H motif) is located at residues 201-220 (LKELGEHFGFSRERARQLEI).

It belongs to the sigma-70 factor family.

Functionally, sigma factors are initiation factors that promote the attachment of RNA polymerase to specific initiation sites and are then released. This sigma factor is essential for late-stage differentiation of M.xanthus. This Myxococcus xanthus protein is RNA polymerase sigma-B factor (sigB).